The chain runs to 130 residues: Small ribosomal subunit protein uS8 (130 aa).

Belongs to the universal ribosomal protein uS8 family. In terms of assembly, part of the 30S ribosomal subunit. Contacts proteins S5 and S12.

Functionally, one of the primary rRNA binding proteins, it binds directly to 16S rRNA central domain where it helps coordinate assembly of the platform of the 30S subunit. The protein is Small ribosomal subunit protein uS8 of Vibrio atlanticus (strain LGP32) (Vibrio splendidus (strain Mel32)).